Here is an 80-residue protein sequence, read N- to C-terminus: Small ribosomal subunit protein uS17 (80 aa).

This sequence belongs to the universal ribosomal protein uS17 family. As to quaternary structure, part of the 30S ribosomal subunit.

One of the primary rRNA binding proteins, it binds specifically to the 5'-end of 16S ribosomal RNA. This chain is Small ribosomal subunit protein uS17, found in Chelativorans sp. (strain BNC1).